Here is a 283-residue protein sequence, read N- to C-terminus: Non-selective voltage-gated ion channel VDAC3 (283 aa).

At Cys2 the chain carries N-acetylcysteine. Thr4 is modified (phosphothreonine). An N6-acetyllysine mark is found at Lys12, Lys15, and Lys20. Transmembrane regions (beta stranded) follow at residues 26 to 35 (MVKIDLRTKS) and 39 to 47 (VEFSTSGHA). Lys53 participates in a covalent cross-link: Glycyl lysine isopeptide (Lys-Gly) (interchain with G-Cter in ubiquitin). The next 3 membrane-spanning stretches (beta stranded) occupy residues 54–64 (ASGNLETKYKI), 69–76 (LTFTQKWN), and 80–89 (TLGTEISWEN). At Lys90 the chain carries N6-acetyllysine. Residues 95-104 (LKLTLDTIFV) form a beta stranded membrane-spanning segment. Residues Lys109 and Lys110 each participate in a glycyl lysine isopeptide (Lys-Gly) (interchain with G-Cter in ubiquitin) cross-link. Beta stranded transmembrane passes span 111 to 120 (SGKLKASYKR), 123 to 130 (FSLGSNVD), 137 to 145 (TIYGWAVLA), 150 to 158 (LAGYQMSFD), 163 to 175 (KLSQNNFALGYKA), 178 to 185 (FQLHTHVN), 189 to 198 (EFGGSIYQKV), 202 to 211 (IETSINLAWT), 218 to 227 (RFGIAAKYKL), and 231 to 238 (TSLSAKVN). Ser241 carries the phosphoserine modification. NAD(+)-binding positions include 242-244 (LIG) and 260-264 (SALID). The next 2 beta stranded transmembrane spans lie at 242-251 (LIGLGYTQTL) and 254-263 (GVKLTLSALI). Lys266 carries the N6-acetyllysine; alternate modification. Lys266 is covalently cross-linked (Glycyl lysine isopeptide (Lys-Gly) (interchain with G-Cter in ubiquitin); alternate). Residues 273 to 282 (HKVGLGFELE) traverse the membrane as a beta stranded segment.

The protein belongs to the eukaryotic mitochondrial porin family. Interacts with ARMC12 in a TBC1D21-dependent manner. Interacts with MISFA. Ubiquitinated by PRKN during mitophagy, leading to its degradation and enhancement of mitophagy. Deubiquitinated by USP30.

It is found in the mitochondrion outer membrane. It localises to the membrane. The catalysed reaction is chloride(in) = chloride(out). The enzyme catalyses K(+)(in) = K(+)(out). Functionally, non-selective voltage-gated ion channel that mediates the transport of anions and cations through the mitochondrion outer membrane and plasma membrane. Forms a high-conducting channel with a stable open state and a voltage-induced closure with a mild preference for anions over cations. Involved in male fertility and sperm mitochondrial sheath formation. The polypeptide is Non-selective voltage-gated ion channel VDAC3 (Bos taurus (Bovine)).